Reading from the N-terminus, the 136-residue chain is MLQPKRMKFRKMFKGRNRGLANGTEVSFGEFGLKAVGRGRLTARQIEAARRAMTRHIKRQGQIWIRVFPDKPITSKPLEVRMGKGKGNVEYWVCQIQPGKVLYEMNGVSEELAREAFTLAAAKLPLKTTFVTKSVM.

Belongs to the universal ribosomal protein uL16 family. Part of the 50S ribosomal subunit.

In terms of biological role, binds 23S rRNA and is also seen to make contacts with the A and possibly P site tRNAs. The sequence is that of Large ribosomal subunit protein uL16 from Shewanella pealeana (strain ATCC 700345 / ANG-SQ1).